A 159-amino-acid polypeptide reads, in one-letter code: Endoribonuclease YbeY (159 aa).

Positions 124, 128, and 134 each coordinate Zn(2+).

The protein belongs to the endoribonuclease YbeY family. Zn(2+) serves as cofactor.

Its subcellular location is the cytoplasm. Functionally, single strand-specific metallo-endoribonuclease involved in late-stage 70S ribosome quality control and in maturation of the 3' terminus of the 16S rRNA. This chain is Endoribonuclease YbeY, found in Halalkalibacterium halodurans (strain ATCC BAA-125 / DSM 18197 / FERM 7344 / JCM 9153 / C-125) (Bacillus halodurans).